The sequence spans 729 residues: Fatty acid oxidation complex subunit alpha (729 aa).

Positions 1 to 189 (MLYKGDTLYL…KIGLVDGVVK (189 aa)) are enoyl-CoA hydratase/isomerase. Asp-296 lines the substrate pocket. Residues 311–729 (ETPKQAAVLG…ARPVGSLKTA (419 aa)) form a 3-hydroxyacyl-CoA dehydrogenase region. Residues Met-324, Asp-343, 400–402 (VVE), Lys-407, and Ser-429 contribute to the NAD(+) site. The active-site For 3-hydroxyacyl-CoA dehydrogenase activity is the His-450. An NAD(+)-binding site is contributed by Asn-453. Substrate contacts are provided by Asn-500 and Tyr-660. The tract at residues 708-729 (RHNEPYYPPVEPARPVGSLKTA) is disordered.

This sequence in the N-terminal section; belongs to the enoyl-CoA hydratase/isomerase family. It in the C-terminal section; belongs to the 3-hydroxyacyl-CoA dehydrogenase family. As to quaternary structure, heterotetramer of two alpha chains (FadB) and two beta chains (FadA).

The catalysed reaction is a (3S)-3-hydroxyacyl-CoA + NAD(+) = a 3-oxoacyl-CoA + NADH + H(+). The enzyme catalyses a (3S)-3-hydroxyacyl-CoA = a (2E)-enoyl-CoA + H2O. It catalyses the reaction a 4-saturated-(3S)-3-hydroxyacyl-CoA = a (3E)-enoyl-CoA + H2O. It carries out the reaction (3S)-3-hydroxybutanoyl-CoA = (3R)-3-hydroxybutanoyl-CoA. The catalysed reaction is a (3Z)-enoyl-CoA = a 4-saturated (2E)-enoyl-CoA. The enzyme catalyses a (3E)-enoyl-CoA = a 4-saturated (2E)-enoyl-CoA. The protein operates within lipid metabolism; fatty acid beta-oxidation. Functionally, involved in the aerobic and anaerobic degradation of long-chain fatty acids via beta-oxidation cycle. Catalyzes the formation of 3-oxoacyl-CoA from enoyl-CoA via L-3-hydroxyacyl-CoA. It can also use D-3-hydroxyacyl-CoA and cis-3-enoyl-CoA as substrate. This Salmonella typhimurium (strain LT2 / SGSC1412 / ATCC 700720) protein is Fatty acid oxidation complex subunit alpha.